The primary structure comprises 123 residues: Large ribosomal subunit protein bL12 (123 aa).

Belongs to the bacterial ribosomal protein bL12 family. As to quaternary structure, homodimer. Part of the ribosomal stalk of the 50S ribosomal subunit. Forms a multimeric L10(L12)X complex, where L10 forms an elongated spine to which 2 to 4 L12 dimers bind in a sequential fashion. Binds GTP-bound translation factors.

Functionally, forms part of the ribosomal stalk which helps the ribosome interact with GTP-bound translation factors. Is thus essential for accurate translation. This is Large ribosomal subunit protein bL12 from Geobacillus thermodenitrificans (strain NG80-2).